Reading from the N-terminus, the 67-residue chain is Large ribosomal subunit protein bL35 (67 aa).

Belongs to the bacterial ribosomal protein bL35 family.

The protein is Large ribosomal subunit protein bL35 of Anaeromyxobacter sp. (strain Fw109-5).